A 137-amino-acid polypeptide reads, in one-letter code: Ribonuclease P protein component (137 aa).

Belongs to the RnpA family. In terms of assembly, consists of a catalytic RNA component (M1 or rnpB) and a protein subunit.

It carries out the reaction Endonucleolytic cleavage of RNA, removing 5'-extranucleotides from tRNA precursor.. RNaseP catalyzes the removal of the 5'-leader sequence from pre-tRNA to produce the mature 5'-terminus. It can also cleave other RNA substrates such as 4.5S RNA. The protein component plays an auxiliary but essential role in vivo by binding to the 5'-leader sequence and broadening the substrate specificity of the ribozyme. This chain is Ribonuclease P protein component, found in Porphyromonas gingivalis (strain ATCC BAA-308 / W83).